A 411-amino-acid chain; its full sequence is tRNA pseudouridine synthase Pus10 (411 aa).

The region spanning 65-192 (ALAKCHLPTR…SGQVKVVRNP (128 aa)) is the THUMP domain. D244 acts as the Nucleophile in catalysis. Substrate-binding residues include Y305 and Y376.

Belongs to the pseudouridine synthase Pus10 family.

The enzyme catalyses uridine(54) in tRNA = pseudouridine(54) in tRNA. It catalyses the reaction uridine(55) in tRNA = pseudouridine(55) in tRNA. In terms of biological role, responsible for synthesis of pseudouridine from uracil-54 and uracil-55 in the psi GC loop of transfer RNAs. The protein is tRNA pseudouridine synthase Pus10 of Pyrobaculum arsenaticum (strain DSM 13514 / JCM 11321 / PZ6).